We begin with the raw amino-acid sequence, 504 residues long: Cytochrome P450 6B6 (504 aa).

Heme is bound at residue cysteine 445.

It belongs to the cytochrome P450 family. The cofactor is heme.

It is found in the endoplasmic reticulum membrane. Its subcellular location is the microsome membrane. It carries out the reaction an organic molecule + reduced [NADPH--hemoprotein reductase] + O2 = an alcohol + oxidized [NADPH--hemoprotein reductase] + H2O + H(+). In Helicoverpa armigera (Cotton bollworm), this protein is Cytochrome P450 6B6 (CYP6B6).